Consider the following 141-residue polypeptide: Large ribosomal subunit protein bL17 (141 aa).

This sequence belongs to the bacterial ribosomal protein bL17 family. Part of the 50S ribosomal subunit. Contacts protein L32.

The polypeptide is Large ribosomal subunit protein bL17 (Agrobacterium fabrum (strain C58 / ATCC 33970) (Agrobacterium tumefaciens (strain C58))).